We begin with the raw amino-acid sequence, 287 residues long: MELLPPALRDMEETEGSLCAFPTPDHFYDDPCFNSSDMSFFEELEPRLVHVTLLKRGPRHEEEEEEHVRAPSGHHQAGRCLLWACKACKRKSSGADRRRAATMRERRRLSKVNDAFETLKRCTSTNPNQRLPKVDILRNAISYIDSLQTLLRDQEQSLYPNMEHYSGDSDASSPSSNCSDGMNSPPCSSRRRNSYDSNFYTDSPNDVRLGKSSMISSLDCLSSIVERISTQSPSCPAPISVDSGSEGSPCSPLQGETLSDRGIPISSPGNSCTQLSHDPSSTIYQIL.

The region spanning 96–147 is the bHLH domain; sequence DRRRAATMRERRRLSKVNDAFETLKRCTSTNPNQRLPKVDILRNAISYIDSL. Disordered stretches follow at residues 161-202 and 231-277; these read NMEH…FYTD and QSPS…QLSH. Low complexity predominate over residues 168-188; it reads DSDASSPSSNCSDGMNSPPCS. Positions 267–277 are enriched in polar residues; it reads SPGNSCTQLSH.

As to quaternary structure, efficient DNA binding requires dimerization with another bHLH protein.

It localises to the nucleus. May act as a transcriptional activator that promotes transcription of muscle-specific target genes and plays a role in muscle differentiation. The sequence is that of Myoblast determination protein 1 homolog B (myod1-b) from Xenopus laevis (African clawed frog).